A 352-amino-acid chain; its full sequence is Carbohydrate sulfotransferase 11 (352 aa).

Over 1-16 (MKPALLEVMRMNRICR) the chain is Cytoplasmic. The chain crosses the membrane as a helical; Signal-anchor for type II membrane protein span at residues 17-37 (MVLATCFGSFILVIFYFQSML). The Lumenal portion of the chain corresponds to 38-352 (HPVMRRNPFG…YSVPNYLKLD (315 aa)). 3'-phosphoadenylyl sulfate is bound by residues 124-130 (PKVACTN) and 186-194 (REPFERLVS). N-linked (GlcNAc...) asparagine glycans are attached at residues Asn205, Asn223, Asn321, and Asn342.

This sequence belongs to the sulfotransferase 2 family. Post-translationally, N-glycosylated; required for activity and stability. Predominantly expressed in brain and kidney. Also expressed at weaker level in heart, spleen and lung. Expressed in developing chondrocytes.

The protein resides in the golgi apparatus membrane. The enzyme catalyses chondroitin beta-D-glucuronate + n 3'-phosphoadenylyl sulfate = chondroitin 4'-sulfate + n adenosine 3',5'-bisphosphate + n H(+). In terms of biological role, catalyzes the transfer of sulfate to position 4 of the N-acetylgalactosamine (GalNAc) residue of chondroitin. Chondroitin sulfate constitutes the predominant proteoglycan present in cartilage and is distributed on the surfaces of many cells and extracellular matrices. Can also sulfate Gal residues in desulfated dermatan sulfate. Preferentially sulfates in GlcA-&gt;GalNAc unit than in IdoA-&gt;GalNAc unit. Does not form 4, 6-di-O-sulfated GalNAc when chondroitin sulfate C is used as an acceptor. In Mus musculus (Mouse), this protein is Carbohydrate sulfotransferase 11 (Chst11).